The chain runs to 377 residues: Transcription initiation factor IIA subunit 1 (377 aa).

The residue at position 2 (Ala-2) is an N-acetylalanine. 3 stretches are compositionally biased toward low complexity: residues 69–79, 89–105, and 248–280; these read QVQQQHQPQQQ, QAQP…TQQV, and QAQI…TGDT. 2 disordered regions span residues 69-107 and 248-330; these read QVQQ…QVLI and QAQI…QELF. Phosphoserine; by TAF1 is present on residues Ser-281 and Ser-282. Positions 281 to 330 are enriched in acidic residues; that stretch reads SSEEDEDEEEDYDDDEEEDKEKDGAEDGQVEEEPLNSEDDVSDEEGQELF. Phosphoserine is present on residues Ser-317 and Ser-322. DNA is bound by residues His-344 and Arg-345.

Belongs to the TFIIA subunit 1 family. TFIIA is a heterodimer of the large unprocessed subunit 1 and a small subunit gamma. It was originally believed to be a heterotrimer of an alpha (p35), a beta (p19) and a gamma subunit (p12). TFIIA forms a complex with TBP. Part of TBP-based Pol II pre-initiation complex (PIC), in which Pol II core assembles with general transcription factors and other specific initiation factors including GTF2E1, GTF2E2, GTF2F1, GTF2F2, TCEA1, ERCC2, ERCC3, GTF2H2, GTF2H3, GTF2H4, GTF2H5, GTF2A1, GTF2A2, GTF2B and TBP; this large multi-subunit PIC complex mediates DNA unwinding and targets Pol II core to the transcription start site where the first phosphodiester bond forms. Post-translationally, the alpha and beta subunits are postranslationally produced from the precursor formby TASP1. The cleavage promotes proteasomal degradation.

It is found in the nucleus. Functionally, TFIIA is a component of the transcription machinery of RNA polymerase II and plays an important role in transcriptional activation. TFIIA in a complex with TBP mediates transcriptional activity. This chain is Transcription initiation factor IIA subunit 1 (Gtf2a1), found in Rattus norvegicus (Rat).